We begin with the raw amino-acid sequence, 85 residues long: Acyl carrier protein (85 aa).

Residues Ser-2–Ala-78 form the Carrier domain. At Ser-37 the chain carries O-(pantetheine 4'-phosphoryl)serine.

It belongs to the acyl carrier protein (ACP) family. In terms of processing, 4'-phosphopantetheine is transferred from CoA to a specific serine of apo-ACP by AcpS. This modification is essential for activity because fatty acids are bound in thioester linkage to the sulfhydryl of the prosthetic group.

It localises to the cytoplasm. Its pathway is lipid metabolism; fatty acid biosynthesis. Functionally, carrier of the growing fatty acid chain in fatty acid biosynthesis. This Azobacteroides pseudotrichonymphae genomovar. CFP2 protein is Acyl carrier protein.